The primary structure comprises 355 residues: MAATGQNLAVVVHRAGDLRLENRPIPEPGPNEVLLRMHSVGICGSDVHYWQHGRIGDFVVKDPMVLGHEASGTVIKVGAGVTHLKPGDRVAIEPGVPRETDEFCKTGRYNLSPTIFFCATPPDDGNLCRYYKHSASYCYKLPDSVTFEEGALIEPLSVGIHACKRAGVTLGSRVFVSGSGPIGLVNVIIAKMMGAAAVVVTDLSASRLQTAKELGADFTIQIKNETPQEVAAKVESLLGCMPEITVECTGVQACIQASIYATRSGGTLVLVGLGPEMVTVPIVNAAVREVDIRGIFRYCNTWPVAISLLASKRINIKPLVTHRFPLEKALEAFETTKRGEGVKIMLKCDPTDQNP.

Position 2 is an N-acetylalanine (alanine 2). Cysteine 43 is a Zn(2+) binding site. Tyrosine 49 is a binding site for substrate. Zn(2+) is bound by residues histidine 68 and glutamate 69. Glutamate 154 serves as a coordination point for substrate. NAD(+)-binding positions include isoleucine 182, aspartate 202, arginine 207, 271-273 (VGL), and 295-297 (IFR). Substrate-binding residues include arginine 297 and tyrosine 298.

The protein belongs to the zinc-containing alcohol dehydrogenase family. Homotetramer. Requires Zn(2+) as cofactor. Expressed in liver.

It is found in the mitochondrion membrane. Its subcellular location is the cell projection. It localises to the cilium. The protein resides in the flagellum. The catalysed reaction is keto-D-fructose + NADH + H(+) = D-sorbitol + NAD(+). Its function is as follows. Polyol dehydrogenase that catalyzes the reversible NAD(+)-dependent oxidation of various sugar alcohols. Is active with D-sorbitol (D-glucitol) as substrate, leading to the C2-oxidized product D-fructose. Is a key enzyme in the polyol pathway that interconverts glucose and fructose via sorbitol, which constitutes an important alternate route for glucose metabolism. The protein is Sorbitol dehydrogenase (SORD) of Gallus gallus (Chicken).